Consider the following 287-residue polypeptide: Protease HtpX (287 aa).

A run of 2 helical transmembrane segments spans residues 4-24 (ILLF…VLNI) and 36-56 (LSGL…ISLL). His-143 is a binding site for Zn(2+). Residue Glu-144 is part of the active site. His-147 provides a ligand contact to Zn(2+). 2 helical membrane passes run 158 to 178 (LMQG…ANIV) and 192 to 212 (MVYF…ASFI). Glu-221 contacts Zn(2+).

This sequence belongs to the peptidase M48B family. The cofactor is Zn(2+).

Its subcellular location is the cell inner membrane. This is Protease HtpX from Vibrio cholerae serotype O1 (strain ATCC 39315 / El Tor Inaba N16961).